The sequence spans 781 residues: Matrix non-peptidase homolog 1 (781 aa).

Residues 1-27 form the signal peptide; that stretch reads MTPPPASPSKKAKSSWLLIALIAVIIG. N-linked (GlcNAc...) asparagine glycosylation is present at N54. Residues 63–94 show a composition bias toward low complexity; that stretch reads TSKATVSTTTTQSATTPSTTTTRIEETTTTTS. Residues 63–113 are disordered; sequence TSKATVSTTTTQSATTPSTTTTRIEETTTTTSGAFDESVKNSEASTSTIPT. N-linked (GlcNAc...) asparagine glycosylation is found at N183, N341, N375, and N520.

This chain is Matrix non-peptidase homolog 1 (mnp-1), found in Caenorhabditis elegans.